The chain runs to 597 residues: Elongation factor 4 (597 aa).

In terms of domain architecture, tr-type G spans 2 to 184 (KHIRNFSIIA…NIVSAIPAPE (183 aa)). GTP contacts are provided by residues 14-19 (DHGKST) and 131-134 (NKID).

Belongs to the TRAFAC class translation factor GTPase superfamily. Classic translation factor GTPase family. LepA subfamily.

The protein resides in the cell inner membrane. It catalyses the reaction GTP + H2O = GDP + phosphate + H(+). In terms of biological role, required for accurate and efficient protein synthesis under certain stress conditions. May act as a fidelity factor of the translation reaction, by catalyzing a one-codon backward translocation of tRNAs on improperly translocated ribosomes. Back-translocation proceeds from a post-translocation (POST) complex to a pre-translocation (PRE) complex, thus giving elongation factor G a second chance to translocate the tRNAs correctly. Binds to ribosomes in a GTP-dependent manner. The chain is Elongation factor 4 from Vibrio campbellii (strain ATCC BAA-1116).